A 349-amino-acid polypeptide reads, in one-letter code: Isopentenyl-diphosphate delta-isomerase (349 aa).

Residue 6 to 7 (RK) coordinates substrate. FMN contacts are provided by residues 62–64 (AMT), serine 93, and asparagine 122. Glutamine 152 serves as a coordination point for substrate. Residue glutamate 153 participates in Mg(2+) binding. Residues lysine 184, threonine 214, 258-259 (GG), and 280-281 (AG) each bind FMN.

It belongs to the IPP isomerase type 2 family. As to quaternary structure, homooctamer. Dimer of tetramers. It depends on FMN as a cofactor. The cofactor is NADPH. Requires Mg(2+) as cofactor.

The protein localises to the cytoplasm. The catalysed reaction is isopentenyl diphosphate = dimethylallyl diphosphate. Functionally, involved in the biosynthesis of isoprenoids. Catalyzes the 1,3-allylic rearrangement of the homoallylic substrate isopentenyl (IPP) to its allylic isomer, dimethylallyl diphosphate (DMAPP). This Bacillus cereus (strain ZK / E33L) protein is Isopentenyl-diphosphate delta-isomerase.